The chain runs to 259 residues: MKLPNLTLSPRQILDDVALCLVFFTRLPLPDLDFRGRGLAAAIWAAPVAGLLVGLIGAIVFATAERFGLAMGPAAALALVATVIATGCLHEDGLSDVADGFGGGKSRGRKLDIMRDSRIGAYGAMALALSLLIRWNVLSELVDPTQALFALVAAHAASRGVLGAFMHLLPPARSDGLSAGAGAVSLETAIAGAVLGAIPLLLLGAGGAIAALILLGLLFAAFHALCLNQIGGQTGDTIGALQQVSEIAVLLVASVALSS.

Helical transmembrane passes span 41-61, 67-87, 119-139, 148-168, 179-199, 200-220, and 237-257; these read AAIW…AIVF, FGLA…IATG, IGAY…NVLS, LFAL…FMHL, AGAG…GAIP, LLLL…LLFA, and TIGA…SVAL.

It belongs to the CobS family. The cofactor is Mg(2+).

Its subcellular location is the cell inner membrane. The catalysed reaction is alpha-ribazole + adenosylcob(III)inamide-GDP = adenosylcob(III)alamin + GMP + H(+). It catalyses the reaction alpha-ribazole 5'-phosphate + adenosylcob(III)inamide-GDP = adenosylcob(III)alamin 5'-phosphate + GMP + H(+). It participates in cofactor biosynthesis; adenosylcobalamin biosynthesis; adenosylcobalamin from cob(II)yrinate a,c-diamide: step 7/7. Joins adenosylcobinamide-GDP and alpha-ribazole to generate adenosylcobalamin (Ado-cobalamin). Also synthesizes adenosylcobalamin 5'-phosphate from adenosylcobinamide-GDP and alpha-ribazole 5'-phosphate. The sequence is that of Adenosylcobinamide-GDP ribazoletransferase from Mesorhizobium japonicum (strain LMG 29417 / CECT 9101 / MAFF 303099) (Mesorhizobium loti (strain MAFF 303099)).